The following is a 365-amino-acid chain: Pyridoxal reductase, chloroplastic (365 aa).

The transit peptide at 1–15 (MALTLSTTKTFTNIN) directs the protein to the chloroplast. Catalysis depends on Tyr94, which acts as the Proton donor.

The protein belongs to the aldo/keto reductase family. Monomer. In terms of tissue distribution, expressed in cotyledons, embryos, flowers, shoots, roots and seeds.

The protein localises to the plastid. The protein resides in the chloroplast. The enzyme catalyses pyridoxine + NADP(+) = pyridoxal + NADPH + H(+). It participates in cofactor degradation; B6 vitamer degradation; pyridoxal from pyridoxine (dehydrogenase route): step 1/1. In terms of biological role, catalyzes the reduction of pyridoxal (PL) with NADPH and oxidation of pyridoxine (PN) with NADP(+). Involved in the PLP salvage pathway. The polypeptide is Pyridoxal reductase, chloroplastic (PLR1) (Arabidopsis thaliana (Mouse-ear cress)).